The chain runs to 458 residues: MSNRALSVVVLAAGKGSRMFSTLPKVLHPLAGKAMVQHVIDTAMRLGASRIHLVYGHGGELLRERLARQYAPLNWVLQAEQRGTGHAVQQTLTCLRDEEDVLILYGDVPLISPDTLQCLLAARPQGGIGLLTVTLDNPEGYGRIVRLNGEVAGIVEQKDASEQQRQIKEINTGILVAGGEDIKRWLGQLTNKNAQGEFYLTDIIAMAWHEGRKINAVQPTRQTEVEGVNNRLQLARLERLFQREQAERLLLAGVMLSDPDRFDLRGEFRHGQDVSIDTNVILEGQVTLGDRVIIGTGCVLKNVVIGDDVIISPYTVIEDARVAARSTLGPFARLRPGSELEEDAHVGNFVEMKQARLGKGSKAGHLSYLGDAEIGAQVNIGAGTITCNYDGANKHKTHIGDDVFVGSDSQLVAPVTIGRGATIGAGTTVTRDVAEGEMIISRIRQFPLANWTRPVKKK.

A pyrophosphorylase region spans residues 1–231 (MSNRALSVVV…QTEVEGVNNR (231 aa)). UDP-N-acetyl-alpha-D-glucosamine contacts are provided by residues 11-14 (LAAG), Lys25, Gln78, 83-84 (GT), 105-107 (YGD), Gly142, Glu156, Asn171, and Asn229. Asp107 is a binding site for Mg(2+). Mg(2+) is bound at residue Asn229. Positions 232–252 (LQLARLERLFQREQAERLLLA) are linker. The segment at 253–458 (GVMLSDPDRF…ANWTRPVKKK (206 aa)) is N-acetyltransferase. Arg335 and Lys353 together coordinate UDP-N-acetyl-alpha-D-glucosamine. The active-site Proton acceptor is the His365. Positions 368 and 379 each coordinate UDP-N-acetyl-alpha-D-glucosamine. Acetyl-CoA is bound by residues Ala382, 388-389 (NY), Ser407, Ala425, and Arg442.

It in the N-terminal section; belongs to the N-acetylglucosamine-1-phosphate uridyltransferase family. The protein in the C-terminal section; belongs to the transferase hexapeptide repeat family. In terms of assembly, homotrimer. It depends on Mg(2+) as a cofactor.

Its subcellular location is the cytoplasm. It catalyses the reaction alpha-D-glucosamine 1-phosphate + acetyl-CoA = N-acetyl-alpha-D-glucosamine 1-phosphate + CoA + H(+). The catalysed reaction is N-acetyl-alpha-D-glucosamine 1-phosphate + UTP + H(+) = UDP-N-acetyl-alpha-D-glucosamine + diphosphate. It functions in the pathway nucleotide-sugar biosynthesis; UDP-N-acetyl-alpha-D-glucosamine biosynthesis; N-acetyl-alpha-D-glucosamine 1-phosphate from alpha-D-glucosamine 6-phosphate (route II): step 2/2. Its pathway is nucleotide-sugar biosynthesis; UDP-N-acetyl-alpha-D-glucosamine biosynthesis; UDP-N-acetyl-alpha-D-glucosamine from N-acetyl-alpha-D-glucosamine 1-phosphate: step 1/1. It participates in bacterial outer membrane biogenesis; LPS lipid A biosynthesis. Its function is as follows. Catalyzes the last two sequential reactions in the de novo biosynthetic pathway for UDP-N-acetylglucosamine (UDP-GlcNAc). The C-terminal domain catalyzes the transfer of acetyl group from acetyl coenzyme A to glucosamine-1-phosphate (GlcN-1-P) to produce N-acetylglucosamine-1-phosphate (GlcNAc-1-P), which is converted into UDP-GlcNAc by the transfer of uridine 5-monophosphate (from uridine 5-triphosphate), a reaction catalyzed by the N-terminal domain. The protein is Bifunctional protein GlmU of Sodalis glossinidius (strain morsitans).